Reading from the N-terminus, the 309-residue chain is Replication factor C subunit 4 (309 aa).

ATP-binding positions include Val-5, Val-17, 42-50, Asn-134, and Arg-192; that span reads GPPGTGKTT.

This sequence belongs to the activator 1 small subunits family. Component of the replication factor C (RFC) complex.

It localises to the nucleus. Functionally, component of ATP-dependent clamp loader (RFC and RFC-like) complexes for DNA clamps. During a clamp loading circle, the RFC:clamp complex binds to DNA and the recognition of the double-stranded/single-stranded junction stimulates ATP hydrolysis by RFC. The complex presumably provides bipartite ATP sites in which one subunit supplies a catalytic site for hydrolysis of ATP bound to the neighboring subunit. Dissociation of RFC from the clamp leaves the clamp encircling DNA. Component of the replication factor C (RFC or activator 1) complex which acts during elongation of primed DNA templates by DNA polymerase delta and epsilon. RFC has an essential but redundant activity in sister chromatid cohesion establishment. In Encephalitozoon cuniculi (strain GB-M1) (Microsporidian parasite), this protein is Replication factor C subunit 4 (RFC4).